The following is a 310-amino-acid chain: GMP synthase [glutamine-hydrolyzing] subunit B (310 aa).

One can recognise a GMPS ATP-PPase domain in the interval 1–187 (MSTSSYIDQI…LGLRTDLQPF (187 aa)). ATP is bound at residue 27–33 (SGGQDSS).

As to quaternary structure, heterodimer composed of a glutamine amidotransferase subunit (A) and a GMP-binding subunit (B).

The catalysed reaction is XMP + L-glutamine + ATP + H2O = GMP + L-glutamate + AMP + diphosphate + 2 H(+). It functions in the pathway purine metabolism; GMP biosynthesis; GMP from XMP (L-Gln route): step 1/1. Functionally, catalyzes the synthesis of GMP from XMP. This Thermoplasma acidophilum (strain ATCC 25905 / DSM 1728 / JCM 9062 / NBRC 15155 / AMRC-C165) protein is GMP synthase [glutamine-hydrolyzing] subunit B (guaAB).